The chain runs to 627 residues: UvrABC system protein C (627 aa).

Residues 22–100 (NNPGVYRMFN…IKRLRPRFNV (79 aa)) enclose the GIY-YIG domain. The UVR domain maps to 210-245 (QSVKDHLAAAMQAASADLDFEHAAVYRDRLAALSHV).

The protein belongs to the UvrC family. Interacts with UvrB in an incision complex.

The protein resides in the cytoplasm. Its function is as follows. The UvrABC repair system catalyzes the recognition and processing of DNA lesions. UvrC both incises the 5' and 3' sides of the lesion. The N-terminal half is responsible for the 3' incision and the C-terminal half is responsible for the 5' incision. The polypeptide is UvrABC system protein C (Brucella abortus biovar 1 (strain 9-941)).